Reading from the N-terminus, the 292-residue chain is Elongation factor Ts (292 aa).

The involved in Mg(2+) ion dislocation from EF-Tu stretch occupies residues 79-82 (TDFV).

Belongs to the EF-Ts family.

Its subcellular location is the cytoplasm. Its function is as follows. Associates with the EF-Tu.GDP complex and induces the exchange of GDP to GTP. It remains bound to the aminoacyl-tRNA.EF-Tu.GTP complex up to the GTP hydrolysis stage on the ribosome. The protein is Elongation factor Ts of Xanthomonas axonopodis pv. citri (strain 306).